The primary structure comprises 239 residues: MNSLYTAEGVMDKHSLWQRYVPLVRHEALRLQVRLPASVELDDLLQAGGIGLLNAVERYDALQGTAFTTYAVQRIRGAMLDELRSRDWVPRSVRRNAREVAQAIGQLEQELGRNATETEVAERLGIDIADYRQMLLDTNNSQLFSYDEWREEHGDSIELVTDDHQRENPLQQLLDSNLRQRVMEAIETLPEREKLVLTLYYQEELNLKEIGAVLEVGESRVSQLHSQAIKRLRTKLGKL.

The tract at residues 16-88 (LWQRYVPLVR…MLDELRSRDW (73 aa)) is sigma-70 factor domain-2. The Interaction with polymerase core subunit RpoC motif lies at 43-46 (DLLQ). Positions 96 to 166 (NAREVAQAIG…IELVTDDHQR (71 aa)) are sigma-70 factor domain-3. The tract at residues 185-233 (AIETLPEREKLVLTLYYQEELNLKEIGAVLEVGESRVSQLHSQAIKRLR) is sigma-70 factor domain-4. The H-T-H motif DNA-binding region spans 207 to 226 (LKEIGAVLEVGESRVSQLHS).

Belongs to the sigma-70 factor family. FliA subfamily.

It is found in the cytoplasm. Functionally, sigma factors are initiation factors that promote the attachment of RNA polymerase to specific initiation sites and are then released. This sigma factor controls the expression of flagella-related genes. This is RNA polymerase sigma factor FliA from Escherichia coli O157:H7.